The chain runs to 779 residues: Pleckstrin homology domain-containing family A member 4 (779 aa).

In terms of domain architecture, PH spans 54–153; sequence PVHIRGWLHK…WLRALGKASR (100 aa). Disordered stretches follow at residues 152–355, 495–669, and 694–766; these read SRAE…LPGP, AGLG…SGGH, and SPER…QEEG. Ser-164 is modified (phosphoserine). Over residues 183–193 the composition is skewed to basic and acidic residues; sequence VNRREEGRTSE. 2 stretches are compositionally biased toward low complexity: residues 246–259 and 324–334; these read PRPR…PPLS and QSTQVSSGSST. Over residues 517-527 the composition is skewed to basic and acidic residues; it reads QREESSERESL. The segment covering 528–540 has biased composition (low complexity); the sequence is SESLELSSPQSPE. A Phosphoserine modification is found at Ser-562. A compositionally biased stretch (polar residues) spans 567 to 580; that stretch reads RASSPECRQQSSPL. Low complexity-rich tracts occupy residues 608-627 and 649-659; these read GLSL…RTLS and SSGSWSSPRHS. The span at 720–740 shows a compositional bias: polar residues; that stretch reads VTSSPTSHKANSATTGFSCQG.

The protein localises to the cytoplasm. The protein resides in the membrane. Functionally, binds specifically to phosphatidylinositol 3-phosphate (PtdIns3P), but not to other phosphoinositides. The protein is Pleckstrin homology domain-containing family A member 4 (Plekha4) of Rattus norvegicus (Rat).